The primary structure comprises 475 residues: Pup--protein ligase (475 aa).

A Mg(2+)-binding site is contributed by Glu-19. ATP is bound at residue Arg-64. Residue Tyr-66 participates in Mg(2+) binding. Asp-68 functions as the Proton acceptor in the catalytic mechanism. Glu-74 lines the Mg(2+) pocket. Residues Thr-77 and Trp-436 each contribute to the ATP site.

It belongs to the Pup ligase/Pup deamidase family. Pup-conjugating enzyme subfamily.

The enzyme catalyses ATP + [prokaryotic ubiquitin-like protein]-L-glutamate + [protein]-L-lysine = ADP + phosphate + N(6)-([prokaryotic ubiquitin-like protein]-gamma-L-glutamyl)-[protein]-L-lysine.. The protein operates within protein degradation; proteasomal Pup-dependent pathway. It functions in the pathway protein modification; protein pupylation. Its function is as follows. Catalyzes the covalent attachment of the prokaryotic ubiquitin-like protein modifier Pup to the proteasomal substrate proteins, thereby targeting them for proteasomal degradation. This tagging system is termed pupylation. The ligation reaction involves the side-chain carboxylate of the C-terminal glutamate of Pup and the side-chain amino group of a substrate lysine. The protein is Pup--protein ligase of Corynebacterium aurimucosum (strain ATCC 700975 / DSM 44827 / CIP 107346 / CN-1) (Corynebacterium nigricans).